The primary structure comprises 36 residues: Trypsin inhibitor 2 (36 aa).

3 disulfide bridges follow: Cys3–Cys20, Cys10–Cys24, and Cys19–Cys35.

Functionally, trypsin inhibitor. The polypeptide is Trypsin inhibitor 2 (Spinacia oleracea (Spinach)).